Consider the following 489-residue polypeptide: Rhamnulokinase (489 aa).

Residue 13–17 (ASSGR) coordinates ATP. Cys-68 and Cys-222 form a disulfide bridge. Substrate is bound by residues Gly-83 and 236 to 238 (HDT). Asp-237 (proton acceptor) is an active-site residue. ATP is bound at residue Thr-259. Asn-296 provides a ligand contact to substrate. Residue Gln-304 participates in ATP binding. A disulfide bridge connects residues Cys-353 and Cys-370. Residue Gly-402 participates in ATP binding. Cys-413 and Cys-417 are disulfide-bonded.

It belongs to the rhamnulokinase family. Mg(2+) serves as cofactor.

It carries out the reaction L-rhamnulose + ATP = L-rhamnulose 1-phosphate + ADP + H(+). It participates in carbohydrate degradation; L-rhamnose degradation; glycerone phosphate from L-rhamnose: step 2/3. Involved in the catabolism of L-rhamnose (6-deoxy-L-mannose). Catalyzes the transfer of the gamma-phosphate group from ATP to the 1-hydroxyl group of L-rhamnulose to yield L-rhamnulose 1-phosphate. This is Rhamnulokinase from Salmonella paratyphi B (strain ATCC BAA-1250 / SPB7).